The chain runs to 299 residues: Very long chain fatty acid elongase 5 (299 aa).

M1 carries the N-acetylmethionine modification. The next 7 membrane-spanning stretches (helical) occupy residues 26-46, 64-84, 112-132, 139-158, 168-187, 205-225, and 226-246; these read WFLLDNYVPTLVCSILYLLIV, ILVVYNLGLTLLSLYMFCELV, VLWWYYFSKLIEFMDTFFFIL, ITVLHVYHHASMLNIWWFVM, FGATLNSFIHVLMYSYYGLS, GQLLQFVLTIIQTSCGVIWPC, and TFPLGWLYFQIGYMISLITLF. S285 is subject to Phosphoserine.

Belongs to the ELO family. ELOVL5 subfamily. Interacts with TECR.

Its subcellular location is the endoplasmic reticulum membrane. It is found in the cell projection. The protein localises to the dendrite. The catalysed reaction is a very-long-chain acyl-CoA + malonyl-CoA + H(+) = a very-long-chain 3-oxoacyl-CoA + CO2 + CoA. It carries out the reaction (6Z,9Z,12Z)-octadecatrienoyl-CoA + malonyl-CoA + H(+) = (8Z,11Z,14Z)-3-oxoeicosatrienoyl-CoA + CO2 + CoA. It catalyses the reaction (9Z,12Z,15Z)-octadecatrienoyl-CoA + malonyl-CoA + H(+) = (11Z,14Z,17Z)-3-oxoeicosatrienoyl-CoA + CO2 + CoA. The enzyme catalyses (9Z)-hexadecenoyl-CoA + malonyl-CoA + H(+) = 3-oxo-(11Z)-octadecenoyl-CoA + CO2 + CoA. The catalysed reaction is (9Z)-octadecenoyl-CoA + malonyl-CoA + H(+) = 3-oxo-(11Z)-eicosenoyl-CoA + CO2 + CoA. It carries out the reaction (11Z)-octadecenoyl-CoA + malonyl-CoA + H(+) = 3-oxo-(13Z)-eicosenoyl-CoA + CO2 + CoA. It catalyses the reaction (9Z,12Z)-octadecadienoyl-CoA + malonyl-CoA + H(+) = (11Z,14Z)-3-oxoicosa-11,14-dienoyl-CoA + CO2 + CoA. The enzyme catalyses (6Z,9Z,12Z,15Z)-octadecatetraenoyl-CoA + malonyl-CoA + H(+) = (8Z,11Z,14Z,17Z)-3-oxoicosatetraenoyl-CoA + CO2 + CoA. The catalysed reaction is (5Z,8Z,11Z,14Z)-eicosatetraenoyl-CoA + malonyl-CoA + H(+) = (7Z,10Z,13Z,16Z)-3-oxodocosatetraenoyl-CoA + CO2 + CoA. It carries out the reaction (5Z,8Z,11Z,14Z,17Z)-eicosapentaenoyl-CoA + malonyl-CoA + H(+) = 3-oxo-(7Z,10Z,13Z,16Z,19Z)-docosapentaenoyl-CoA + CO2 + CoA. It participates in lipid metabolism; polyunsaturated fatty acid biosynthesis. Functionally, catalyzes the first and rate-limiting reaction of the four reactions that constitute the long-chain fatty acids elongation cycle. This endoplasmic reticulum-bound enzymatic process allows the addition of 2 carbons to the chain of long- and very long-chain fatty acids (VLCFAs) per cycle. Condensing enzyme that acts specifically toward polyunsaturated acyl-CoA with the higher activity toward C18:3(n-6) acyl-CoA. May participate in the production of monounsaturated and of polyunsaturated VLCFAs of different chain lengths that are involved in multiple biological processes as precursors of membrane lipids and lipid mediators. In conditions where the essential linoleic and alpha linoleic fatty acids are lacking it is also involved in the synthesis of Mead acid from oleic acid. This chain is Very long chain fatty acid elongase 5, found in Bos taurus (Bovine).